The sequence spans 156 residues: Ribosomal RNA large subunit methyltransferase H (156 aa).

Residues leucine 73, glycine 104, and isoleucine 123–leucine 128 each bind S-adenosyl-L-methionine.

It belongs to the RNA methyltransferase RlmH family. As to quaternary structure, homodimer.

The protein resides in the cytoplasm. It catalyses the reaction pseudouridine(1915) in 23S rRNA + S-adenosyl-L-methionine = N(3)-methylpseudouridine(1915) in 23S rRNA + S-adenosyl-L-homocysteine + H(+). Functionally, specifically methylates the pseudouridine at position 1915 (m3Psi1915) in 23S rRNA. The chain is Ribosomal RNA large subunit methyltransferase H from Stenotrophomonas maltophilia (strain K279a).